A 583-amino-acid polypeptide reads, in one-letter code: Extracellular serine/threonine protein kinase four-jointed (583 aa).

The Cytoplasmic segment spans residues 1 to 78 (MYDIKRLEAG…RRRSLQRRAC (78 aa)). A helical; Signal-anchor for type II membrane protein membrane pass occupies residues 79–99 (LLSILAAFVFGMALGVVVPMF). The Extracellular portion of the chain corresponds to 100–583 (GLPRHQDSPP…LGQVQKCQGS (484 aa)). A disordered region spans residues 179-222 (RTASGRYRKGPERRLSKKMPERVQPQETSRSPTTSPTNPTSEHQ). The span at 187–199 (KGPERRLSKKMPE) shows a compositional bias: basic and acidic residues. Residues 206–219 (TSRSPTTSPTNPTS) show a composition bias toward low complexity. N-linked (GlcNAc...) asparagine glycosylation is found at Asn310 and Asn379. Positions 384–421 (MQSERQAQSQPHGLLKRLGAASSPGSAHQSNAIEETGT) are disordered. An N-linked (GlcNAc...) asparagine glycan is attached at Asn491.

The protein belongs to the FJX1/FJ family. Proteolytically cleaved to yield a secreted protein. As to expression, in the eye disk, expressed in a gradient ahead of the morphogenetic furrow, high at the equator and low at the poles of the eye. In the leg disk, expressed in concentric rings, possibly corresponding to segmental boundaries. In the wing disk, expression is localized in the wing pouch; low in peripheral regions and high towards the center.

The protein localises to the golgi apparatus membrane. The protein resides in the secreted. It catalyses the reaction L-seryl-[protein] + ATP = O-phospho-L-seryl-[protein] + ADP + H(+). The catalysed reaction is L-threonyl-[protein] + ATP = O-phospho-L-threonyl-[protein] + ADP + H(+). Functionally, golgi serine/threonine protein kinase required for intermediate growth in the proximal-distal axis. Phosphorylates specific residues within extracellular cadherin domains of Fat (ft) and Dachsous (ds) as they transit through the Golgi. Acts in ommatidial polarity determination as a secondary signal downstream of Notch, JAK/STAT and wingless. Also necessary for the initiation, up-regulation or maintenance of Notch ligand, Serrate (Ser) expression in legs, thereby participating in a feedback loop with N signaling. Sufficient for joint formation and growth in the leg. The polypeptide is Extracellular serine/threonine protein kinase four-jointed (Drosophila melanogaster (Fruit fly)).